The primary structure comprises 306 residues: Pantothenate kinase (306 aa).

90–97 (GSVAVGKS) contacts ATP.

It belongs to the prokaryotic pantothenate kinase family.

The protein resides in the cytoplasm. The catalysed reaction is (R)-pantothenate + ATP = (R)-4'-phosphopantothenate + ADP + H(+). It participates in cofactor biosynthesis; coenzyme A biosynthesis; CoA from (R)-pantothenate: step 1/5. This is Pantothenate kinase (coaA) from Listeria innocua serovar 6a (strain ATCC BAA-680 / CLIP 11262).